A 905-amino-acid chain; its full sequence is DNA mismatch repair protein MutS (905 aa).

Residues 389-410 are disordered; sequence ERPANPEGTYPTDAETSGDTLP. 638-645 serves as a coordination point for ATP; it reads GPNMAGKS. The segment at 826-847 is disordered; that stretch reads RDAARGTNSAPSRQTLPGLDLP. The segment covering 831–840 has biased composition (polar residues); the sequence is GTNSAPSRQT.

The protein belongs to the DNA mismatch repair MutS family.

Functionally, this protein is involved in the repair of mismatches in DNA. It is possible that it carries out the mismatch recognition step. This protein has a weak ATPase activity. The protein is DNA mismatch repair protein MutS of Nitratidesulfovibrio vulgaris (strain ATCC 29579 / DSM 644 / CCUG 34227 / NCIMB 8303 / VKM B-1760 / Hildenborough) (Desulfovibrio vulgaris).